Here is a 128-residue protein sequence, read N- to C-terminus: 3-aminoacrylate deaminase RutC (128 aa).

This sequence belongs to the RutC family. Homotrimer.

It carries out the reaction (Z)-3-aminoacrylate + H2O + H(+) = 3-oxopropanoate + NH4(+). Its function is as follows. Involved in pyrimidine catabolism. Catalyzes the deamination of 3-aminoacrylate to malonic semialdehyde, a reaction that can also occur spontaneously. RutC may facilitate the reaction and modulate the metabolic fitness, rather than catalyzing essential functions. In Shigella flexneri serotype X (strain 2002017), this protein is 3-aminoacrylate deaminase RutC.